A 110-amino-acid polypeptide reads, in one-letter code: Large ribosomal subunit protein uL24 (110 aa).

This sequence belongs to the universal ribosomal protein uL24 family. As to quaternary structure, part of the 50S ribosomal subunit.

Functionally, one of two assembly initiator proteins, it binds directly to the 5'-end of the 23S rRNA, where it nucleates assembly of the 50S subunit. In terms of biological role, one of the proteins that surrounds the polypeptide exit tunnel on the outside of the subunit. In Chloroflexus aggregans (strain MD-66 / DSM 9485), this protein is Large ribosomal subunit protein uL24.